We begin with the raw amino-acid sequence, 192 residues long: Signal peptidase complex catalytic subunit sec11 (192 aa).

Residues 1-18 (MLSFLSSNLSSTRQSLAQ) are Cytoplasmic-facing. A helical; Signal-anchor for type II membrane protein transmembrane segment spans residues 19 to 39 (VLNFALVLSTAFMLWKGLSVF). Residues 40–192 (TASSSPIVVV…GLMVILQREQ (153 aa)) are Lumenal-facing. Active-site charge relay system residues include Ser53, His92, and Asp133. Residues 177-188 (VLLGIMGLMVIL) are C-terminal short (CTS) helix.

It belongs to the peptidase S26B family. As to quaternary structure, component of the signal peptidase complex (SPC) composed of a catalytic subunit SEC11 and three accessory subunits SPC1, SPC2 and SPC3. The complex induces a local thinning of the ER membrane which is used to measure the length of the signal peptide (SP) h-region of protein substrates. This ensures the selectivity of the complex towards h-regions shorter than 18-20 amino acids. SPC associates with the translocon complex.

It localises to the endoplasmic reticulum membrane. It carries out the reaction Cleavage of hydrophobic, N-terminal signal or leader sequences from secreted and periplasmic proteins.. Functionally, catalytic component of the signal peptidase complex (SPC) which catalyzes the cleavage of N-terminal signal sequences from nascent proteins as they are translocated into the lumen of the endoplasmic reticulum. Specifically cleaves N-terminal signal peptides that contain a hydrophobic alpha-helix (h-region) shorter than 18-20 amino acids. The chain is Signal peptidase complex catalytic subunit sec11 (sec11) from Neosartorya fischeri (strain ATCC 1020 / DSM 3700 / CBS 544.65 / FGSC A1164 / JCM 1740 / NRRL 181 / WB 181) (Aspergillus fischerianus).